We begin with the raw amino-acid sequence, 1198 residues long: Structural polyprotein (1198 aa).

Positions 2 to 15 (TKKPGGPGKNRAIN) are interaction with host EXOC1. A hydrophobic; homodimerization of capsid protein C region spans residues 37-72 (LLDGRGPVRFVLALITFFKFTALAPTKALLGRWRAV). Positions 106–127 (GGNESSIMWLASLAIVIACAGA) are cleaved as a propeptide — ER anchor for the capsid protein C, removed in mature form by serine protease NS3. A helical membrane pass occupies residues 110-130 (SSIMWLASLAIVIACAGAMKL). An N-linked (GlcNAc...) asparagine; by host glycan is attached at N142. Helical transmembrane passes span 254–274 (WIIR…MLGS) and 280–294 (VVFT…PAYS). Cystine bridges form between C297–C324, C354–C410, C354–C415, C368–C399, C386–C410, and C386–C415. The fusion peptide stretch occupies residues 392-405 (DRGWGNGCGLFGKG). Residue N448 is glycosylated (N-linked (GlcNAc...) asparagine; by host). Disulfide bonds link C484/C581 and C598/C629. A run of 2 helical transmembrane segments spans residues 747-767 (FGGM…WMGV) and 774-794 (IALA…NVHA). 6 disulfides stabilise this stretch: C798-C809, C849-C937, C973-C1017, C1074-C1123, C1085-C1106, and C1107-C1110. 2 N-linked (GlcNAc...) asparagine; by host glycosylation sites follow: N924 and N1001. Residues 1151 to 1178 (MIDPFSAGPSGDVSGHPGGPSQEVDGQI) form a disordered region.

As to quaternary structure, homodimer. Interacts (via N-terminus) with host EXOC1 (via C-terminus); this interaction results in EXOC1 degradation through the proteasome degradation pathway. Interacts with host CAPRIN1; this interaction is involved in the suppression of the integrated stress response. Forms heterodimers with envelope protein E in the endoplasmic reticulum and Golgi. In terms of assembly, homodimer; in the endoplasmic reticulum and Golgi. Interacts with protein prM. Interacts with non-structural protein 1. In terms of processing, genome polyprotein: Specific enzymatic cleavages in vivo yield mature proteins. Cleavages in the lumen of endoplasmic reticulum are performed by host signal peptidase, whereas cleavages in the cytoplasmic side are performed by serine protease NS3. Signal cleavage at the 2K-4B site requires a prior NS3 protease-mediated cleavage at the 4A-2K site. Cleaved in post-Golgi vesicles by a host furin, releasing the mature small envelope protein M, and peptide pr. This cleavage is incomplete as up to 30% of viral particles still carry uncleaved prM. Post-translationally, N-glycosylated.

The protein resides in the secreted. It is found in the virion membrane. The protein localises to the host endoplasmic reticulum membrane. Functionally, plays a role in virus budding by binding to the cell membrane and gathering the viral RNA into a nucleocapsid that forms the core of a mature virus particle. During virus entry, may induce genome penetration into the host cytoplasm after hemifusion induced by the surface proteins. Can migrate to the cell nucleus where it modulates host functions. Overcomes the anti-viral effects of host EXOC1 by sequestering and degrading the latter through the proteasome degradation pathway. Inhibits the integrated stress response (ISR) in the infected cell by binding to host CAPRIN1. Inhibits RNA silencing by interfering with host Dicer. In terms of biological role, prevents premature fusion activity of envelope proteins in trans-Golgi by binding to envelope protein E at pH6.0. After virion release in extracellular space, gets dissociated from E dimers. Its function is as follows. Acts as a chaperone for envelope protein E during intracellular virion assembly by masking and inactivating envelope protein E fusion peptide. prM is the only viral peptide matured by host furin in the trans-Golgi network probably to avoid catastrophic activation of the viral fusion activity in acidic Golgi compartment prior to virion release. prM-E cleavage is inefficient, and many virions are only partially matured. These uncleaved prM would play a role in immune evasion. Functionally, may play a role in virus budding. Exerts cytotoxic effects by activating a mitochondrial apoptotic pathway through M ectodomain. May display a viroporin activity. Binds to host cell surface receptor and mediates fusion between viral and cellular membranes. Envelope protein is synthesized in the endoplasmic reticulum in the form of heterodimer with protein prM. They play a role in virion budding in the ER, and the newly formed immature particle is covered with 60 spikes composed of heterodimer between precursor prM and envelope protein E. The virion is transported to the Golgi apparatus where the low pH causes dissociation of PrM-E heterodimers and formation of E homodimers. prM-E cleavage is inefficient, and many virions are only partially matured. These uncleaved prM would play a role in immune evasion. This Ardeidae (herons) protein is Structural polyprotein.